The primary structure comprises 576 residues: Eukaryotic translation initiation factor 3 subunit D (576 aa).

The interval 103–176 (DSTKTRFGRG…KDYDKPQRNR (74 aa)) is disordered. Over residues 110-122 (GRGGLARGRGQRG) the composition is skewed to gly residues. Residues 165-176 (GWKDYDKPQRNR) are compositionally biased toward basic and acidic residues. Residues 304-318 (TLDMVTVNENAADAP) are RNA gate.

This sequence belongs to the eIF-3 subunit D family. Component of the eukaryotic translation initiation factor 3 (eIF-3) complex.

Its subcellular location is the cytoplasm. In terms of biological role, mRNA cap-binding component of the eukaryotic translation initiation factor 3 (eIF-3) complex, which is involved in protein synthesis of a specialized repertoire of mRNAs and, together with other initiation factors, stimulates binding of mRNA and methionyl-tRNAi to the 40S ribosome. The eIF-3 complex specifically targets and initiates translation of a subset of mRNAs involved in cell proliferation. In the eIF-3 complex, eif3d specifically recognizes and binds the 7-methylguanosine cap of a subset of mRNAs. The polypeptide is Eukaryotic translation initiation factor 3 subunit D (Botryotinia fuckeliana (strain B05.10) (Noble rot fungus)).